The following is a 207-amino-acid chain: Small ribosomal subunit protein uS4 (207 aa).

Residues 20-45 (TPKAARYMEKRPYAPGEHGRTKRKAD) are disordered. The region spanning 93 to 158 (MRLDALVLRA…TEPFQVAAAG (66 aa)) is the S4 RNA-binding domain.

Belongs to the universal ribosomal protein uS4 family. Part of the 30S ribosomal subunit. Contacts protein S5. The interaction surface between S4 and S5 is involved in control of translational fidelity.

Functionally, one of the primary rRNA binding proteins, it binds directly to 16S rRNA where it nucleates assembly of the body of the 30S subunit. With S5 and S12 plays an important role in translational accuracy. The polypeptide is Small ribosomal subunit protein uS4 (Leifsonia xyli subsp. xyli (strain CTCB07)).